Consider the following 469-residue polypeptide: UDP-N-acetylmuramate--L-alanine ligase (469 aa).

113 to 119 (GSHGKTT) provides a ligand contact to ATP.

The protein belongs to the MurCDEF family.

Its subcellular location is the cytoplasm. The enzyme catalyses UDP-N-acetyl-alpha-D-muramate + L-alanine + ATP = UDP-N-acetyl-alpha-D-muramoyl-L-alanine + ADP + phosphate + H(+). It participates in cell wall biogenesis; peptidoglycan biosynthesis. Cell wall formation. This is UDP-N-acetylmuramate--L-alanine ligase from Sorangium cellulosum (strain So ce56) (Polyangium cellulosum (strain So ce56)).